A 470-amino-acid chain; its full sequence is MSNGRVTQVMGPVIDVRFEHNEVPEINNALIIEVPKEDGTFELTLEVALQLGDDVVRTIAMDSTDGVQRGMEVQNTGKDISVPVGEVTLGRVFNVLGDTIDLEDKLDGSVRRDPIHRQSPNFDELSTEVEILETGIKVVDLLAPYIKGGKIGLFGGAGVGKTVLIQELINNIAQEHGGISVFAGVGERTREGNDLYYEMRDSGVIKKTAMVFGQMNEPPGARMRVALSALTMAEYFRDEQGQDVLLFIDNIFRFTQAGSEVSALLGRMPSAVGYQPTLATEMGQLQERITSTNKGSVTSIQAVFVPADDYTDPAPATAFAHLDATTNLERKLTEMGIYPAVDPLASTSRALEPAIVGQEHYEVARDVQSTLQKYRELQDIIAILGMDELSEEDKLTVERARRIQFFLSQNFHVAEQFTGQKGSYVPVKTTVADFKDILDGKYDHIPEDAFRLVGSMEDVIAKAKDMGVEV.

Residue 155-162 (GGAGVGKT) participates in ATP binding.

It belongs to the ATPase alpha/beta chains family. F-type ATPases have 2 components, CF(1) - the catalytic core - and CF(0) - the membrane proton channel. CF(1) has five subunits: alpha(3), beta(3), gamma(1), delta(1), epsilon(1). CF(0) has three main subunits: a(1), b(2) and c(9-12). The alpha and beta chains form an alternating ring which encloses part of the gamma chain. CF(1) is attached to CF(0) by a central stalk formed by the gamma and epsilon chains, while a peripheral stalk is formed by the delta and b chains.

Its subcellular location is the cell membrane. It carries out the reaction ATP + H2O + 4 H(+)(in) = ADP + phosphate + 5 H(+)(out). In terms of biological role, produces ATP from ADP in the presence of a proton gradient across the membrane. The catalytic sites are hosted primarily by the beta subunits. In Staphylococcus haemolyticus (strain JCSC1435), this protein is ATP synthase subunit beta.